Here is a 256-residue protein sequence, read N- to C-terminus: Triosephosphate isomerase (256 aa).

9-11 (NWK) contributes to the substrate binding site. The active-site Electrophile is the His-96. Glu-168 functions as the Proton acceptor in the catalytic mechanism. Substrate contacts are provided by residues Ser-213 and 234–235 (GG).

This sequence belongs to the triosephosphate isomerase family. Homodimer.

The protein resides in the cytoplasm. It carries out the reaction D-glyceraldehyde 3-phosphate = dihydroxyacetone phosphate. The protein operates within carbohydrate biosynthesis; gluconeogenesis. Its pathway is carbohydrate degradation; glycolysis; D-glyceraldehyde 3-phosphate from glycerone phosphate: step 1/1. Its function is as follows. Involved in the gluconeogenesis. Catalyzes stereospecifically the conversion of dihydroxyacetone phosphate (DHAP) to D-glyceraldehyde-3-phosphate (G3P). In Baumannia cicadellinicola subsp. Homalodisca coagulata, this protein is Triosephosphate isomerase.